Here is a 407-residue protein sequence, read N- to C-terminus: Multifunctional CCA protein (407 aa).

Gly8 and Arg11 together coordinate ATP. Gly8 and Arg11 together coordinate CTP. Mg(2+) is bound by residues Asp21 and Asp23. Residues Arg91, Arg137, and Arg140 each coordinate ATP. 3 residues coordinate CTP: Arg91, Arg137, and Arg140. The HD domain occupies 228–329; that stretch reads TGIHTLLVAE…VKIFNKLDVW (102 aa).

It belongs to the tRNA nucleotidyltransferase/poly(A) polymerase family. Bacterial CCA-adding enzyme type 1 subfamily. As to quaternary structure, monomer. Can also form homodimers and oligomers. Mg(2+) serves as cofactor. It depends on Ni(2+) as a cofactor.

The catalysed reaction is a tRNA precursor + 2 CTP + ATP = a tRNA with a 3' CCA end + 3 diphosphate. The enzyme catalyses a tRNA with a 3' CCA end + 2 CTP + ATP = a tRNA with a 3' CCACCA end + 3 diphosphate. Its function is as follows. Catalyzes the addition and repair of the essential 3'-terminal CCA sequence in tRNAs without using a nucleic acid template. Adds these three nucleotides in the order of C, C, and A to the tRNA nucleotide-73, using CTP and ATP as substrates and producing inorganic pyrophosphate. tRNA 3'-terminal CCA addition is required both for tRNA processing and repair. Also involved in tRNA surveillance by mediating tandem CCA addition to generate a CCACCA at the 3' terminus of unstable tRNAs. While stable tRNAs receive only 3'-terminal CCA, unstable tRNAs are marked with CCACCA and rapidly degraded. This Vibrio vulnificus (strain CMCP6) protein is Multifunctional CCA protein.